A 371-amino-acid chain; its full sequence is Glutamate 5-kinase (371 aa).

K14 is an ATP binding site. Residues S52, D139, and N151 each contribute to the substrate site. 171–172 is a binding site for ATP; the sequence is SD. Positions 275–353 constitute a PUA domain; the sequence is EGRLHLDSGA…ADLAMELGPS (79 aa).

Belongs to the glutamate 5-kinase family.

Its subcellular location is the cytoplasm. The enzyme catalyses L-glutamate + ATP = L-glutamyl 5-phosphate + ADP. It participates in amino-acid biosynthesis; L-proline biosynthesis; L-glutamate 5-semialdehyde from L-glutamate: step 1/2. Catalyzes the transfer of a phosphate group to glutamate to form L-glutamate 5-phosphate. This is Glutamate 5-kinase from Frankia casuarinae (strain DSM 45818 / CECT 9043 / HFP020203 / CcI3).